The primary structure comprises 193 residues: MNMYATLILALALSMDAFAASICKGAALHRPHFREAIRTGLIFGLAEACTPLIGWSLGLYASQYIIEWDHWVAFTLLFILGCRMITESFKTKQEKKCESPCRHNSIVLITTAIATSLDAMAIGIGLAFLEVNIVHTAMAIGMMTMIMATLGMLIGRYIGPRLGKRAELIGGLILIAIGFNILFEHLELFMYAK.

Helical transmembrane passes span 3–23, 41–61, 65–85, 106–126, 133–153, and 169–189; these read MYAT…ASIC, LIFG…GLYA, IIEW…CRMI, IVLI…GIGL, IVHT…LGML, and IGGL…LELF.

Belongs to the MntP (TC 9.B.29) family.

It localises to the cell inner membrane. Probably functions as a manganese efflux pump. This chain is Putative manganese efflux pump MntP, found in Photorhabdus laumondii subsp. laumondii (strain DSM 15139 / CIP 105565 / TT01) (Photorhabdus luminescens subsp. laumondii).